The chain runs to 206 residues: Acidic proline-rich protein PRP33 (206 aa).

A signal peptide spans 1 to 13; sequence MLVVLLTAALLVL. Positions 15–206 are disordered; that stretch reads SAHGSDEEVI…EQPSYLWFSS (192 aa). Over residues 55–71 the composition is skewed to acidic residues; the sequence is ENGDGDDSDDGDDDGSG. Repeat copies occupy residues 80–97, 98–115, 116–133, 134–152, 153–170, and 171–189. Residues 80–189 are 6 X 18 AA approximate tandem repeats; that stretch reads PPPHGGNHQR…RPPQPRKPQD (110 aa). The segment covering 103–112 has biased composition (low complexity); that stretch reads GPQTSSQPGN. Residues 113–174 show a composition bias toward pro residues; it reads PQGPPPQGGP…PGNPQGPPPQ (62 aa).

It localises to the secreted. Functionally, may protect teeth by binding to tannins. The protein is Acidic proline-rich protein PRP33 (Prpg1) of Rattus norvegicus (Rat).